A 143-amino-acid chain; its full sequence is ATP synthase subunit 9, mitochondrial (143 aa).

Residues 1 to 62 constitute a mitochondrion transit peptide; the sequence is MAASRVFAQR…ARQAFAARRQ (62 aa). 2 helical membrane passes run 85–105 and 119–139; these read IGLGGAGIGIGVVFGSLLLAV and AILGFAFVEAIGLFDLMVAMM.

Belongs to the ATPase C chain family. As to quaternary structure, F-type ATPases have 2 components, CF(1) - the catalytic core - and CF(0) - the membrane proton channel. CF(1) has five subunits: alpha(3), beta(3), gamma(1), delta(1), epsilon(1). CF(0) has three main subunits: a, b and c.

The protein localises to the mitochondrion membrane. In terms of biological role, mitochondrial membrane ATP synthase (F(1)F(0) ATP synthase or Complex V) produces ATP from ADP in the presence of a proton gradient across the membrane which is generated by electron transport complexes of the respiratory chain. F-type ATPases consist of two structural domains, F(1) - containing the extramembraneous catalytic core and F(0) - containing the membrane proton channel, linked together by a central stalk and a peripheral stalk. During catalysis, ATP synthesis in the catalytic domain of F(1) is coupled via a rotary mechanism of the central stalk subunits to proton translocation. Part of the complex F(0) domain. A homomeric c-ring of probably 10 subunits is part of the complex rotary element. This Emericella nidulans (strain FGSC A4 / ATCC 38163 / CBS 112.46 / NRRL 194 / M139) (Aspergillus nidulans) protein is ATP synthase subunit 9, mitochondrial (atp9).